Consider the following 574-residue polypeptide: Septation ring formation regulator EzrA (574 aa).

Topologically, residues 1 to 7 (MSNGLII) are extracellular. A helical transmembrane segment spans residues 8 to 26 (LIIVIAVALILAYVAAVVL). At 27–574 (RKRNETLLDS…YEKTRENIRF (548 aa)) the chain is on the cytoplasmic side. Coiled-coil stretches lie at residues 104 to 141 (LKAK…EAKN), 267 to 424 (NITQ…QKVN), and 456 to 524 (ASDH…SIQE).

It belongs to the EzrA family.

The protein localises to the cell membrane. Negative regulator of FtsZ ring formation; modulates the frequency and position of FtsZ ring formation. Inhibits FtsZ ring formation at polar sites. Interacts either with FtsZ or with one of its binding partners to promote depolymerization. This chain is Septation ring formation regulator EzrA, found in Streptococcus gordonii (strain Challis / ATCC 35105 / BCRC 15272 / CH1 / DL1 / V288).